A 208-amino-acid chain; its full sequence is Cytochrome c biogenesis ATP-binding export protein CcmA (208 aa).

The ABC transporter domain occupies 2-206; that stretch reads LEAKELTCAR…IRLTAEGRDE (205 aa). Residue 34 to 41 participates in ATP binding; that stretch reads GPNGAGKT.

Belongs to the ABC transporter superfamily. CcmA exporter (TC 3.A.1.107) family. In terms of assembly, the complex is composed of two ATP-binding proteins (CcmA) and two transmembrane proteins (CcmB).

It is found in the cell inner membrane. It catalyses the reaction heme b(in) + ATP + H2O = heme b(out) + ADP + phosphate + H(+). In terms of biological role, part of the ABC transporter complex CcmAB involved in the biogenesis of c-type cytochromes; once thought to export heme, this seems not to be the case, but its exact role is uncertain. Responsible for energy coupling to the transport system. This is Cytochrome c biogenesis ATP-binding export protein CcmA from Tatumella citrea (Pantoea citrea).